The following is a 205-amino-acid chain: Spermatogenesis-associated protein 24 (205 aa).

Positions Leu17 to Ser167 form a coiled coil. The required for interaction with CBX5 and TBPL1 stretch occupies residues Glu138–Gln185. A disordered region spans residues Gln185–Lys205. Positions Lys186–Lys205 are enriched in basic residues.

It belongs to the SPATA24 family. Homodimer. Interacts with CBX3, CBX5, GMNN, GTF2B, TBPL1 and the polycomb proteins PHCF2, RNF2 and SCMH1 but not with CBX1 or PCGF2. Testis-specific (at protein level).

The protein localises to the cytoplasm. It is found in the nucleus. It localises to the nucleolus. Its subcellular location is the nucleoplasm. Functionally, binds DNA with high affinity but does not bind to TATA boxes. Synergises with GMNN and TBP in activation of TATA box-containing promoters and with GMNN and TBPL1 in activation of the NF1 TATA-less promoter. May play a role in cytoplasm movement and removal during spermiogenesis. In Mus musculus (Mouse), this protein is Spermatogenesis-associated protein 24 (Spata24).